Reading from the N-terminus, the 427-residue chain is SAC3 domain-containing protein 1 (427 aa).

Composition is skewed to basic and acidic residues over residues Met-1–Ser-10 and Ala-117–Ser-127. Disordered stretches follow at residues Met-1–Val-53 and Leu-101–Pro-143. Residues Pro-134 to Pro-143 show a composition bias toward pro residues. One can recognise a PCI domain in the interval Gln-229–His-397. Ser-425 bears the Phosphoserine mark.

This sequence belongs to the SAC3 family. In terms of assembly, may be part of a SEM1-containing complex. Present in spleen cells (at protein level).

Its subcellular location is the cytoplasm. It is found in the cytoskeleton. It localises to the microtubule organizing center. The protein localises to the centrosome. The protein resides in the spindle. Involved in centrosome duplication and mitotic progression. This Mus musculus (Mouse) protein is SAC3 domain-containing protein 1 (Sac3d1).